The chain runs to 67 residues: Transcription elongation factor Spt4 (67 aa).

Zn(2+) contacts are provided by Cys7, Cys10, Cys19, and Cys22.

The protein belongs to the archaeal Spt4 family. As to quaternary structure, heterodimer composed of Spt4 and Spt5. Interacts with RNA polymerase (RNAP). The complex interacts with FttA.

The protein resides in the chromosome. In terms of biological role, the Stp4-Spt5 complex stimulates transcription elongation on both naked DNA and histone-bound DNA (chromatin), facilitating transcription through the histone barrier. Neither protein functions alone. The complex also stimulates the transcription termination activity of FttA, neither protein alone stimulates FttA-dependent termination. The protein is Transcription elongation factor Spt4 of Thermococcus kodakarensis (strain ATCC BAA-918 / JCM 12380 / KOD1) (Pyrococcus kodakaraensis (strain KOD1)).